A 595-amino-acid polypeptide reads, in one-letter code: Protein halfway (595 aa).

Disordered stretches follow at residues 1-42 and 64-98; these read MLLT…ADDE and TGAA…PLLP. N-linked (GlcNAc...) asparagine glycosylation is found at asparagine 250 and asparagine 255. In terms of domain architecture, LRRNT spans 347–402; it reads ESTKRCMTKCPVIPNYGSCKCRFESIMIIQDDQSKPKCHVDCSNLGLVELPPRLPD. LRR repeat units lie at residues 403–424, 429–450, and 454–475; these read NTFV…FQTN, NINR…EGTK, and NFQR…FLNN. The LRRCT domain occupies 489 to 538; sequence NKLQCDCNSAKTLQNWLKERSTDIPDYMEIRCRNIPQSVIELQEAKLCQS.

In terms of biological role, has a role in the ecdysone induced cascade; probably indirect control of 'late' ecdysone genes. This chain is Protein halfway (hfw), found in Drosophila pseudoobscura pseudoobscura (Fruit fly).